Consider the following 499-residue polypeptide: Glycerol kinase (499 aa).

T13 lines the ADP pocket. T13, T14, and S15 together coordinate ATP. T13 serves as a coordination point for sn-glycerol 3-phosphate. R17 serves as a coordination point for ADP. Residues R83, E84, Y135, and D245 each coordinate sn-glycerol 3-phosphate. 5 residues coordinate glycerol: R83, E84, Y135, D245, and Q246. Residues T267 and G310 each contribute to the ADP site. Residues T267, G310, Q314, and G411 each contribute to the ATP site. G411 and N415 together coordinate ADP.

It belongs to the FGGY kinase family.

It catalyses the reaction glycerol + ATP = sn-glycerol 3-phosphate + ADP + H(+). The protein operates within polyol metabolism; glycerol degradation via glycerol kinase pathway; sn-glycerol 3-phosphate from glycerol: step 1/1. With respect to regulation, inhibited by fructose 1,6-bisphosphate (FBP). Its function is as follows. Key enzyme in the regulation of glycerol uptake and metabolism. Catalyzes the phosphorylation of glycerol to yield sn-glycerol 3-phosphate. This Xanthomonas campestris pv. campestris (strain 8004) protein is Glycerol kinase.